The following is a 599-amino-acid chain: Prostaglandin G/H synthase 1 (599 aa).

Residues 1–23 (MSRSLLLWFLLFLLLLPPLPVLL) form the signal peptide. The 39-residue stretch at 31–69 (PVNPCCYYPCQHQGICVRFGLDRYQCDCTRTGYSGPNCT) folds into the EGF-like domain. Cystine bridges form between Cys35–Cys46, Cys36–Cys158, Cys40–Cys56, and Cys58–Cys68. Asn67, Asn103, and Asn143 each carry an N-linked (GlcNAc...) asparagine glycan. Catalysis depends on His206, which acts as the Proton acceptor. Tyr384 functions as the For cyclooxygenase activity in the catalytic mechanism. His387 provides a ligand contact to heme b. Residues Cys568 and Cys574 are joined by a disulfide bond.

It belongs to the prostaglandin G/H synthase family. In terms of assembly, homodimer. It depends on heme b as a cofactor.

The protein localises to the microsome membrane. The protein resides in the endoplasmic reticulum membrane. It catalyses the reaction (5Z,8Z,11Z,14Z)-eicosatetraenoate + AH2 + 2 O2 = prostaglandin H2 + A + H2O. It carries out the reaction (5Z,8Z,11Z,14Z)-eicosatetraenoate + 2 O2 = prostaglandin G2. The enzyme catalyses prostaglandin G2 + AH2 = prostaglandin H2 + A + H2O. The catalysed reaction is (9Z,12Z)-octadecadienoate + AH2 + O2 = (9R)-hydroxy-(10E,12Z)-octadecadienoate + A + H2O. It catalyses the reaction (9Z,12Z)-octadecadienoate + AH2 + O2 = (9S)-hydroxy-(10E,12Z)-octadecadienoate + A + H2O. It carries out the reaction (9Z,12Z)-octadecadienoate + AH2 + O2 = (13S)-hydroxy-(9Z,11E)-octadecadienoate + A + H2O. The enzyme catalyses (9Z,12Z)-octadecadienoate + AH2 + O2 = (13R)-hydroxy-(9Z,11E)-octadecadienoate + A + H2O. Its pathway is lipid metabolism; prostaglandin biosynthesis. Its activity is regulated as follows. The cyclooxygenase activity is inhibited by nonsteroidal anti-inflammatory drugs (NSAIDs) including ibuprofen, flurbiprofen, ketoprofen, naproxen, flurbiprofen, anirolac, fenclofenac and diclofenac. Functionally, dual cyclooxygenase and peroxidase that plays an important role in the biosynthesis pathway of prostanoids, a class of C20 oxylipins mainly derived from arachidonate ((5Z,8Z,11Z,14Z)-eicosatetraenoate, AA, C20:4(n-6)), with a particular role in the inflammatory response. The cyclooxygenase activity oxygenates AA to the hydroperoxy endoperoxide prostaglandin G2 (PGG2), and the peroxidase activity reduces PGG2 to the hydroxy endoperoxide prostaglandin H2 (PGH2), the precursor of all 2-series prostaglandins and thromboxanes. This complex transformation is initiated by abstraction of hydrogen at carbon 13 (with S-stereochemistry), followed by insertion of molecular O2 to form the endoperoxide bridge between carbon 9 and 11 that defines prostaglandins. The insertion of a second molecule of O2 (bis-oxygenase activity) yields a hydroperoxy group in PGG2 that is then reduced to PGH2 by two electrons. Involved in the constitutive production of prostanoids in particular in the stomach and platelets. In gastric epithelial cells, it is a key step in the generation of prostaglandins, such as prostaglandin E2 (PGE2), which plays an important role in cytoprotection. In platelets, it is involved in the generation of thromboxane A2 (TXA2), which promotes platelet activation and aggregation, vasoconstriction and proliferation of vascular smooth muscle cells. Can also use linoleate (LA, (9Z,12Z)-octadecadienoate, C18:2(n-6)) as substrate and produce hydroxyoctadecadienoates (HODEs) in a regio- and stereospecific manner, being (9R)-HODE ((9R)-hydroxy-(10E,12Z)-octadecadienoate) and (13S)-HODE ((13S)-hydroxy-(9Z,11E)-octadecadienoate) its major products. This is Prostaglandin G/H synthase 1 from Homo sapiens (Human).